The primary structure comprises 213 residues: MSRNPFMQNMPEIQAAGGLVPMVIEQSARGERAYDIYSRLLKERVIFLVGQVEDYMANLICAQLLFLEAENPDKDIHLYINSPGGSVTAGMAIYDTMQFIKADVSTTCIGQACSMGAFLLAGGAKGKRFCLPNSRVMIHQPLGGFQGQASDIEIHAKEILFIRERLNELLAHHTGQSLETIERDTNRDNFMSAPRAVEYGIVDAVHEKRQMPV.

Residue Ser-114 is the Nucleophile of the active site. His-139 is an active-site residue.

This sequence belongs to the peptidase S14 family. Fourteen ClpP subunits assemble into 2 heptameric rings which stack back to back to give a disk-like structure with a central cavity, resembling the structure of eukaryotic proteasomes.

It localises to the cytoplasm. It catalyses the reaction Hydrolysis of proteins to small peptides in the presence of ATP and magnesium. alpha-casein is the usual test substrate. In the absence of ATP, only oligopeptides shorter than five residues are hydrolyzed (such as succinyl-Leu-Tyr-|-NHMec, and Leu-Tyr-Leu-|-Tyr-Trp, in which cleavage of the -Tyr-|-Leu- and -Tyr-|-Trp bonds also occurs).. In terms of biological role, cleaves peptides in various proteins in a process that requires ATP hydrolysis. Has a chymotrypsin-like activity. Plays a major role in the degradation of misfolded proteins. In Ectopseudomonas mendocina (strain ymp) (Pseudomonas mendocina), this protein is ATP-dependent Clp protease proteolytic subunit.